The following is a 194-amino-acid chain: Adenylate kinase (194 aa).

G10–T15 is an ATP binding site. The tract at residues S30–V59 is NMP. Residues T31, R36, Q57 to V59, G85 to R88, and Q92 contribute to the AMP site. An LID region spans residues S126 to D142. Residue R127 coordinates ATP. AMP-binding residues include R139 and R150. A178 is a binding site for ATP.

It belongs to the adenylate kinase family. As to quaternary structure, monomer.

It is found in the cytoplasm. It carries out the reaction AMP + ATP = 2 ADP. It participates in purine metabolism; AMP biosynthesis via salvage pathway; AMP from ADP: step 1/1. Catalyzes the reversible transfer of the terminal phosphate group between ATP and AMP. Plays an important role in cellular energy homeostasis and in adenine nucleotide metabolism. This is Adenylate kinase from Brucella abortus (strain S19).